Consider the following 419-residue polypeptide: Tyrosine--tRNA ligase 2 (419 aa).

Tyrosine 34 contacts L-tyrosine. A 'HIGH' region motif is present at residues 39 to 48 (PTGDSMHIGH). Tyrosine 168 and glutamine 172 together coordinate L-tyrosine. The 'KMSKS' region motif lies at 230–234 (KFGKS). An ATP-binding site is contributed by lysine 233. Positions 352–418 (KNIVEWLVDL…GKKNYSLVKL (67 aa)) constitute an S4 RNA-binding domain.

It belongs to the class-I aminoacyl-tRNA synthetase family. TyrS type 1 subfamily. In terms of assembly, homodimer.

It is found in the cytoplasm. It carries out the reaction tRNA(Tyr) + L-tyrosine + ATP = L-tyrosyl-tRNA(Tyr) + AMP + diphosphate + H(+). Catalyzes the attachment of tyrosine to tRNA(Tyr) in a two-step reaction: tyrosine is first activated by ATP to form Tyr-AMP and then transferred to the acceptor end of tRNA(Tyr). This Bacillus anthracis protein is Tyrosine--tRNA ligase 2.